The primary structure comprises 42 residues: Delta-hexatoxin-Iw1a (42 aa).

4 disulfides stabilise this stretch: Cys-1–Cys-15, Cys-8–Cys-20, Cys-14–Cys-31, and Cys-16–Cys-42.

This sequence belongs to the neurotoxin 06 (delta-actx) family. As to expression, expressed by the venom gland.

It localises to the secreted. Its function is as follows. Inhibits tetrodotoxin-sensitive sodium channels by binding to site 3. It slows the inactivation, causes a prolongation of action potential duration resulting in repetitive firing in autonomic and motor nerve fibers. Does not depolarize the resting potential. Does not affect tetrodotoxin-resistant sodium channels. This lethal neurotoxin is active on both insect and mammalian voltage-gated sodium channels (Nav). This chain is Delta-hexatoxin-Iw1a, found in Illawarra wisharti (Illawarra funnel-web spider).